The primary structure comprises 82 residues: Putative membrane protein insertion efficiency factor (82 aa).

A disordered region spans residues 63–82 (PGGHDPVPESTILSKEKSVK).

The protein belongs to the UPF0161 family.

It localises to the cell inner membrane. Functionally, could be involved in insertion of integral membrane proteins into the membrane. This chain is Putative membrane protein insertion efficiency factor, found in Protochlamydia amoebophila (strain UWE25).